The primary structure comprises 386 residues: Lycopene beta-cyclase (386 aa).

4-34 contributes to the NAD(+) binding site; the sequence is DVLLAGAGLANGLIALALRAARPDLRVLLLD.

It belongs to the lycopene cyclase family. It depends on FAD as a cofactor.

The enzyme catalyses a carotenoid psi-end group = a carotenoid beta-end derivative. It carries out the reaction all-trans-lycopene = gamma-carotene. It catalyses the reaction gamma-carotene = all-trans-beta-carotene. Its pathway is carotenoid biosynthesis; astaxanthin biosynthesis. Functionally, catalyzes the double cyclization reaction which converts lycopene to beta-carotene. This chain is Lycopene beta-cyclase, found in Paracoccus sp. (strain N81106 / MBIC 01143) (Agrobacterium aurantiacum).